The chain runs to 296 residues: Ribosomal RNA small subunit methyltransferase H (296 aa).

S-adenosyl-L-methionine-binding positions include 38 to 40 (GVH), Glu57, Phe80, Asp103, and His110.

It belongs to the methyltransferase superfamily. RsmH family.

Its subcellular location is the cytoplasm. It carries out the reaction cytidine(1402) in 16S rRNA + S-adenosyl-L-methionine = N(4)-methylcytidine(1402) in 16S rRNA + S-adenosyl-L-homocysteine + H(+). Its function is as follows. Specifically methylates the N4 position of cytidine in position 1402 (C1402) of 16S rRNA. This is Ribosomal RNA small subunit methyltransferase H from Borreliella burgdorferi (strain ATCC 35210 / DSM 4680 / CIP 102532 / B31) (Borrelia burgdorferi).